The chain runs to 256 residues: Small ribosomal subunit protein uS2 (256 aa).

The protein belongs to the universal ribosomal protein uS2 family.

This chain is Small ribosomal subunit protein uS2, found in Brucella abortus (strain S19).